Reading from the N-terminus, the 515-residue chain is Maturase K (515 aa).

Belongs to the intron maturase 2 family. MatK subfamily.

It localises to the plastid. Its subcellular location is the chloroplast. Usually encoded in the trnK tRNA gene intron. Probably assists in splicing its own and other chloroplast group II introns. The chain is Maturase K from Trillium luteum (Yellow wakerobin).